A 145-amino-acid polypeptide reads, in one-letter code: Ubiquitin-conjugating enzyme E2 variant 1C (145 aa).

The 134-residue stretch at proline 12–phenylalanine 145 folds into the UBC core domain.

Belongs to the ubiquitin-conjugating enzyme family. As to quaternary structure, heterodimer with UBC35 or UBC36. As to expression, expressed in roots, shoots, leaves, stems and flowers, but not in pollen.

Has no ubiquitin ligase activity on its own. The heterodimer with UBC catalyzes the synthesis of non-canonical poly-ubiquitin chains that are linked through 'Lys-63'. This type of poly-ubiquitination does not lead to protein degradation by the proteasome. Mediates transcriptional activation of target genes. May play a role in the control of progress through the cell cycle and differentiation. May play a role in the error-free DNA repair pathway and contributes to the survival of cells after DNA damage. The chain is Ubiquitin-conjugating enzyme E2 variant 1C (UEV1C) from Arabidopsis thaliana (Mouse-ear cress).